The primary structure comprises 393 residues: Argininosuccinate synthase (393 aa).

ATP contacts are provided by residues 10 to 18 (AYSGGLDTS) and A37. Y88 lines the L-citrulline pocket. Residue G118 participates in ATP binding. Residues T120, N124, and D125 each contribute to the L-aspartate site. N124 serves as a coordination point for L-citrulline. Residues R128, S176, S185, E261, and Y273 each coordinate L-citrulline.

It belongs to the argininosuccinate synthase family. Type 1 subfamily. Homotetramer.

The protein resides in the cytoplasm. It carries out the reaction L-citrulline + L-aspartate + ATP = 2-(N(omega)-L-arginino)succinate + AMP + diphosphate + H(+). It participates in amino-acid biosynthesis; L-arginine biosynthesis; L-arginine from L-ornithine and carbamoyl phosphate: step 2/3. This Carsonella ruddii (strain PV) protein is Argininosuccinate synthase.